Reading from the N-terminus, the 247-residue chain is ATP synthase subunit a, chloroplastic (247 aa).

Transmembrane regions (helical) follow at residues 38-58 (QVLI…TLAV), 95-115 (VPFI…GALL), 134-154 (INTT…AGLS), 199-219 (LVVV…VMFL), and 220-240 (GLFT…AYIG).

It belongs to the ATPase A chain family. F-type ATPases have 2 components, CF(1) - the catalytic core - and CF(0) - the membrane proton channel. CF(1) has five subunits: alpha(3), beta(3), gamma(1), delta(1), epsilon(1). CF(0) has four main subunits: a, b, b' and c.

It is found in the plastid. The protein resides in the chloroplast thylakoid membrane. Key component of the proton channel; it plays a direct role in the translocation of protons across the membrane. The sequence is that of ATP synthase subunit a, chloroplastic from Lactuca sativa (Garden lettuce).